The sequence spans 964 residues: A-type ATP synthase subunit A (964 aa).

Residues 392-518 enclose the DOD-type homing endonuclease domain; sequence FLGYLMANGT…LSYLFAKLGI (127 aa).

This sequence belongs to the ATPase alpha/beta chains family. In terms of assembly, has multiple subunits with at least A(3), B(3), C, D, E, F, H, I and proteolipid K(x). In terms of processing, this protein undergoes a protein self splicing that involves a post-translational excision of the VDE intervening region (intein) followed by peptide ligation.

It localises to the cell membrane. The enzyme catalyses ATP + H2O + 4 H(+)(in) = ADP + phosphate + 5 H(+)(out). Component of the A-type ATP synthase that produces ATP from ADP in the presence of a proton gradient across the membrane. The A chain is the catalytic subunit. In Pyrococcus horikoshii (strain ATCC 700860 / DSM 12428 / JCM 9974 / NBRC 100139 / OT-3), this protein is A-type ATP synthase subunit A.